The following is a 115-amino-acid chain: MNTATRVIVAQNVRTRNRTFQITKQGVVIVALVIALLCSAFGVVYFKDLNRRLFIQYQTLQREKAEELIQWGKLLLEQTTWSTQSRVQRIAEQQLGMQLPSAKEVILVNADAMIE.

Over 1–25 the chain is Cytoplasmic; sequence MNTATRVIVAQNVRTRNRTFQITKQ. The chain crosses the membrane as a helical span at residues 26 to 46; sequence GVVIVALVIALLCSAFGVVYF. At 47-115 the chain is on the periplasmic side; that stretch reads KDLNRRLFIQ…ILVNADAMIE (69 aa).

It belongs to the FtsL family. As to quaternary structure, part of a complex composed of FtsB, FtsL and FtsQ.

Its subcellular location is the cell inner membrane. Its function is as follows. Essential cell division protein. May link together the upstream cell division proteins, which are predominantly cytoplasmic, with the downstream cell division proteins, which are predominantly periplasmic. This chain is Cell division protein FtsL, found in Coxiella burnetii (strain RSA 493 / Nine Mile phase I).